A 417-amino-acid polypeptide reads, in one-letter code: Serine hydroxymethyltransferase (417 aa).

Residues Leu120 and 124-126 (GHL) contribute to the (6S)-5,6,7,8-tetrahydrofolate site. Lys229 bears the N6-(pyridoxal phosphate)lysine mark.

It belongs to the SHMT family. In terms of assembly, homodimer. Requires pyridoxal 5'-phosphate as cofactor.

It is found in the cytoplasm. The enzyme catalyses (6R)-5,10-methylene-5,6,7,8-tetrahydrofolate + glycine + H2O = (6S)-5,6,7,8-tetrahydrofolate + L-serine. The protein operates within one-carbon metabolism; tetrahydrofolate interconversion. It participates in amino-acid biosynthesis; glycine biosynthesis; glycine from L-serine: step 1/1. Its function is as follows. Catalyzes the reversible interconversion of serine and glycine with tetrahydrofolate (THF) serving as the one-carbon carrier. This reaction serves as the major source of one-carbon groups required for the biosynthesis of purines, thymidylate, methionine, and other important biomolecules. Also exhibits THF-independent aldolase activity toward beta-hydroxyamino acids, producing glycine and aldehydes, via a retro-aldol mechanism. The polypeptide is Serine hydroxymethyltransferase (Anaeromyxobacter dehalogenans (strain 2CP-1 / ATCC BAA-258)).